The chain runs to 197 residues: HTH-type transcriptional regulator BetI (197 aa).

An HTH tetR-type domain is found at 8-68; sequence PIRRQQLIQA…ATMRHLMNAL (61 aa). Positions 31–50 form a DNA-binding region, H-T-H motif; it reads SIALIARLAGVSNGIISHYF.

The protein operates within amine and polyamine biosynthesis; betaine biosynthesis via choline pathway [regulation]. Repressor involved in the biosynthesis of the osmoprotectant glycine betaine. It represses transcription of the choline transporter BetT and the genes of BetAB involved in the synthesis of glycine betaine. The chain is HTH-type transcriptional regulator BetI from Pseudomonas savastanoi pv. phaseolicola (strain 1448A / Race 6) (Pseudomonas syringae pv. phaseolicola (strain 1448A / Race 6)).